Here is a 1167-residue protein sequence, read N- to C-terminus: MSSAAADRRRAEAGTGSAAAAAAAAGEGDVGRFLAAAERMGLPGFSPSDLDTGPVSSVVTCLLALRDQFVSHDVGGLSCSLPEKVMMQSMEFPRKENDPGTQNSEGRRKIPKNPAMSEPSSPLSQTTLSSISRHAGHSFHDVFQLRQGRYSDLPSSKISEMMKSTSLDNAPTQSLLSVVNVILDELVETKIGEIPYHLACLLRKVILEIERRISTQAEHIRNQNNLMKAREEKYKSRIRVLEALASGTSDQTHVNSNATNGKAHVSPDHAVHQMKMEKDKTEDKKRLAEKDVVLLVKDKEEDVTRLTKDKEDMAKLLKDKEDIIRLMKEKEEMVWMMREKENMVSLNNGRVEDKHQLTDKDVANSAKYRNEIIKLMKEKEDSNDTIMKLNIELEAMKSSYEGTRILLDSKKKEVLQLLMDKESIEYIVSQLKQELAIERSSHQTHIQELETRAFQANNKLEQRIKEMELMLEDSKTRVRDLEELLESRSQIWEQKEIRLNQFIGLQIQNIQDLRLSSVSIRHEILHCQKRWSEEICDLGQSLKVLTNAAENYHATLEENRKLFNEVQELKGNIRVHCRIRPFLPGEDQTSTTIEYVGDNGELILANPAKRGKEGHKLFKFNKVLGPSASQDEVFKEIQPLIRSVLDGYNVCIFAYGQTGSGKTYTMTGPENATEKDWGVNYRALNDLFHISRSRRDTVMYKVSVQMIEIYNEQIHDLLGNSGSEKKLGILNASQPNGLAVPDATMHPVNSSSDVIELMRTGLENRSVGATALNERSSRSHSVVTMHIQGVDLKTGVTLRGALHLVDLAGSERVDRSAATGDRLKEAQHINKSLSALGDVIFSLSQKNAHVPYRNSKLTQVLQNSLGGNAKTLMFVQVNPDVSSYAETLSTLKFADRVSGVELGAAKANKEGKDIKEFKEQLSLLKDKIAKKDEEISRLQLQSHNTPRATAKRADSLLKHSSSSPGISSLGSKIQHRRTASGGRIKIVGSRAGSDVDNFSDISDRHSEAGSMQSVDDIQQSREIMGLSKLSMSEMGHNSVDPELPCFGYDDSEGRLSDISDSGLSMGAETDCSMSSVVELTSLPDQDRVSGTQKEQHMAPSTPKDRLHKVATRASRTTTPKTPQSPTLWPKLRDPPPPRSPISTSTGKVRVTQATSSSRNSSTQKRWT.

The disordered stretch occupies residues 93 to 130; that stretch reads PRKENDPGTQNSEGRRKIPKNPAMSEPSSPLSQTTLSS. Over residues 117–130 the composition is skewed to low complexity; that stretch reads SEPSSPLSQTTLSS. Coiled-coil stretches lie at residues 271–333, 366–398, and 432–489; these read VHQM…KEEM, AKYRNEIIKLMKEKEDSNDTIMKLNIELEAMKS, and KQEL…ESRS. The 329-residue stretch at 572-900 folds into the Kinesin motor domain; it reads NIRVHCRIRP…LKFADRVSGV (329 aa). Position 656-663 (656-663) interacts with ATP; sequence GQTGSGKT. Residues 907 to 944 are a coiled coil; sequence ANKEGKDIKEFKEQLSLLKDKIAKKDEEISRLQLQSHN. 2 disordered regions span residues 955–974 and 1083–1167; these read SLLKHSSSSPGISSLGSKIQ and PDQD…KRWT. The span at 958–972 shows a compositional bias: low complexity; that stretch reads KHSSSSPGISSLGSK. Polar residues-rich tracts occupy residues 1113–1124 and 1151–1167; these read ASRTTTPKTPQS and TQATSSSRNSSTQKRWT.

The protein belongs to the TRAFAC class myosin-kinesin ATPase superfamily. Kinesin family. KIN-14 subfamily.

The polypeptide is Kinesin-like protein KIN-14M (Oryza sativa subsp. japonica (Rice)).